The chain runs to 234 residues: Ubiquinone biosynthesis O-methyltransferase (234 aa).

S-adenosyl-L-methionine contacts are provided by Arg39, Gly59, Asp80, and Met124.

Belongs to the methyltransferase superfamily. UbiG/COQ3 family.

It catalyses the reaction a 3-demethylubiquinol + S-adenosyl-L-methionine = a ubiquinol + S-adenosyl-L-homocysteine + H(+). The catalysed reaction is a 3-(all-trans-polyprenyl)benzene-1,2-diol + S-adenosyl-L-methionine = a 2-methoxy-6-(all-trans-polyprenyl)phenol + S-adenosyl-L-homocysteine + H(+). It participates in cofactor biosynthesis; ubiquinone biosynthesis. In terms of biological role, O-methyltransferase that catalyzes the 2 O-methylation steps in the ubiquinone biosynthetic pathway. The chain is Ubiquinone biosynthesis O-methyltransferase from Aliivibrio fischeri (strain ATCC 700601 / ES114) (Vibrio fischeri).